A 402-amino-acid polypeptide reads, in one-letter code: N-acetyllactosaminide beta-1,6-N-acetylglucosaminyl-transferase (402 aa).

Over 1 to 7 (MMGSWKH) the chain is Cytoplasmic. Residues 8–23 (CLFSASLISALIFVFV) form a helical; Signal-anchor for type II membrane protein membrane-spanning segment. At 24-400 (YNTELWENKR…QSETAIQPSW (377 aa)) the chain is on the lumenal side. A glycan (N-linked (GlcNAc...) asparagine) is linked at Asn41.

The protein belongs to the glycosyltransferase 14 family. In terms of tissue distribution, expressed in lens epithelium cells. As to expression, expressed in reticulocytes.

The protein resides in the golgi apparatus membrane. The enzyme catalyses a beta-D-Gal-(1-&gt;4)-beta-D-GlcNAc-(1-&gt;3)-beta-D-Gal-(1-&gt;4)-beta-D-GlcNAc derivative + UDP-N-acetyl-alpha-D-glucosamine = a beta-D-Gal-(1-&gt;4)-beta-D-GlcNAc-(1-&gt;3)-[beta-D-GlcNAc-(1-&gt;6)]-beta-D-Gal-(1-&gt;4)-N-acetyl-beta-D-glucosaminyl derivative + UDP + H(+). Its pathway is protein modification; protein glycosylation. Functionally, branching enzyme that converts linear into branched poly-N-acetyllactosaminoglycans. Introduces the blood group I antigen during embryonic development. It is closely associated with the development and maturation of erythroid cells. In terms of biological role, determines the expression of the blood group I antigen in erythrocytes. This Homo sapiens (Human) protein is N-acetyllactosaminide beta-1,6-N-acetylglucosaminyl-transferase (GCNT2).